We begin with the raw amino-acid sequence, 161 residues long: Urease accessory protein UreE (161 aa).

The protein belongs to the UreE family.

It localises to the cytoplasm. Functionally, involved in urease metallocenter assembly. Binds nickel. Probably functions as a nickel donor during metallocenter assembly. The protein is Urease accessory protein UreE of Arthrobacter sp. (strain FB24).